The sequence spans 205 residues: MSNAEATTSSDRTGTGKAEAESVHNPEAERVRALLEPSVQAHRLYLEDVSIHVAGANRVVHVVVDLPQEETGGVSLDVIAEISKELSGILDGDPSYDSRPYDLEVSSPGVGRPLTEPRHWHRARGRMVKVNVIQGENLTGRIQSVDDDGVTLVPEIAAKKGMKPKQGEPEKIPFDRIRNGKVEIEFSHLDEVGLEDENNGPSEEA.

Residues 1–13 show a composition bias toward polar residues; the sequence is MSNAEATTSSDRT. A disordered region spans residues 1 to 27; the sequence is MSNAEATTSSDRTGTGKAEAESVHNPE. Positions 18–27 are enriched in basic and acidic residues; it reads AEAESVHNPE.

The protein belongs to the RimP family.

It localises to the cytoplasm. Its function is as follows. Required for maturation of 30S ribosomal subunits. The chain is Ribosome maturation factor RimP from Arthrobacter sp. (strain FB24).